Here is a 358-residue protein sequence, read N- to C-terminus: Mesaconyl-CoA hydratase (358 aa).

The 105-residue stretch at 44-148 folds into the MaoC-like domain; the sequence is AHDPGLRLTH…TSSSRPQYGI (105 aa).

Belongs to the enoyl-CoA hydratase/isomerase family.

It catalyses the reaction (2R,3S)-beta-methylmalyl-CoA = 2-methylfumaryl-CoA + H2O. Its function is as follows. Involved in the methylaspartate cycle. Catalyzes the reversible hydration of mesaconyl-CoA (2-methylfumaryl-CoA) to yield beta-methylmalyl-CoA ((2R,3S)-beta-methylmalyl-CoA). The sequence is that of Mesaconyl-CoA hydratase from Haloarcula marismortui (strain ATCC 43049 / DSM 3752 / JCM 8966 / VKM B-1809) (Halobacterium marismortui).